Consider the following 83-residue polypeptide: U1-theraphotoxin-Hs1f (83 aa).

An N-terminal signal peptide occupies residues 1–21; it reads MKVTLIAILTCAAVLVLHTTA. Positions 22 to 48 are excised as a propeptide; it reads AEELEESQLMEVGMPDTELAAVDEERL. Cystine bridges form between Cys-51–Cys-64, Cys-55–Cys-75, and Cys-69–Cys-80.

Belongs to the neurotoxin 12 (Hwtx-2) family. 02 (Hwtx-2) subfamily. Expressed by the venom gland.

The protein localises to the secreted. Lethal neurotoxin that blocks neuromuscular transmission. This is U1-theraphotoxin-Hs1f from Cyriopagopus schmidti (Chinese bird spider).